A 346-amino-acid polypeptide reads, in one-letter code: Small ribosomal subunit biogenesis GTPase RsgA (346 aa).

The segment at Met-1–Lys-26 is disordered. The segment covering Thr-7 to Lys-20 has biased composition (polar residues). Positions Glu-103 to Phe-271 constitute a CP-type G domain. GTP contacts are provided by residues Asn-159–Asp-162 and Gly-213–Ser-221. Zn(2+)-binding residues include Cys-295, Cys-300, His-302, and Cys-308.

It belongs to the TRAFAC class YlqF/YawG GTPase family. RsgA subfamily. As to quaternary structure, monomer. Associates with 30S ribosomal subunit, binds 16S rRNA. Requires Zn(2+) as cofactor.

Its subcellular location is the cytoplasm. One of several proteins that assist in the late maturation steps of the functional core of the 30S ribosomal subunit. Helps release RbfA from mature subunits. May play a role in the assembly of ribosomal proteins into the subunit. Circularly permuted GTPase that catalyzes slow GTP hydrolysis, GTPase activity is stimulated by the 30S ribosomal subunit. The protein is Small ribosomal subunit biogenesis GTPase RsgA of Haemophilus influenzae (strain 86-028NP).